We begin with the raw amino-acid sequence, 377 residues long: Alternative oxidase, mitochondrial (377 aa).

Residues 149–169 (LSRFIFLESIAAVPGMVAGML) traverse the membrane as a helical segment. Fe cation is bound by residues Glu-156, Glu-195, and His-198. A helical membrane pass occupies residues 214–234 (ILIIGAQGVYFNAMFVAYLIS). 3 residues coordinate Fe cation: Glu-246, Glu-303, and His-306.

Belongs to the alternative oxidase family. It depends on Fe cation as a cofactor.

It localises to the mitochondrion inner membrane. In terms of biological role, catalyzes cyanide-resistant oxygen consumption. May increase respiration when the cytochrome respiratory pathway is restricted, or in response to low temperatures. This chain is Alternative oxidase, mitochondrial (AOX1), found in Pyricularia oryzae (strain 70-15 / ATCC MYA-4617 / FGSC 8958) (Rice blast fungus).